The chain runs to 316 residues: Beta-ketoacyl-[acyl-carrier-protein] synthase III (316 aa).

Catalysis depends on residues Cys-112 and His-243. The tract at residues 244–248 is ACP-binding; sequence QANLR. Asn-273 is a catalytic residue.

It belongs to the thiolase-like superfamily. FabH family. As to quaternary structure, homodimer.

The protein resides in the cytoplasm. It catalyses the reaction malonyl-[ACP] + acetyl-CoA + H(+) = 3-oxobutanoyl-[ACP] + CO2 + CoA. It participates in lipid metabolism; fatty acid biosynthesis. Catalyzes the condensation reaction of fatty acid synthesis by the addition to an acyl acceptor of two carbons from malonyl-ACP. Catalyzes the first condensation reaction which initiates fatty acid synthesis and may therefore play a role in governing the total rate of fatty acid production. Possesses both acetoacetyl-ACP synthase and acetyl transacylase activities. Its substrate specificity determines the biosynthesis of branched-chain and/or straight-chain of fatty acids. The protein is Beta-ketoacyl-[acyl-carrier-protein] synthase III of Histophilus somni (strain 129Pt) (Haemophilus somnus).